The primary structure comprises 246 residues: tRNA pseudouridine synthase A (246 aa).

The active-site Nucleophile is the D52. A substrate-binding site is contributed by Y112.

This sequence belongs to the tRNA pseudouridine synthase TruA family. In terms of assembly, homodimer.

The catalysed reaction is uridine(38/39/40) in tRNA = pseudouridine(38/39/40) in tRNA. In terms of biological role, formation of pseudouridine at positions 38, 39 and 40 in the anticodon stem and loop of transfer RNAs. This is tRNA pseudouridine synthase A from Pelagibacter ubique (strain HTCC1062).